A 427-amino-acid polypeptide reads, in one-letter code: 3-phosphoshikimate 1-carboxyvinyltransferase (427 aa).

Residues Lys-20, Ser-21, and Arg-25 each contribute to the 3-phosphoshikimate site. Residue Lys-20 participates in phosphoenolpyruvate binding. The phosphoenolpyruvate site is built by Gly-92 and Arg-120. The 3-phosphoshikimate site is built by Ser-166, Gln-168, Asp-312, and Lys-339. Gln-168 lines the phosphoenolpyruvate pocket. Asp-312 serves as the catalytic Proton acceptor. Residues Arg-343 and Arg-385 each coordinate phosphoenolpyruvate.

It belongs to the EPSP synthase family. As to quaternary structure, monomer.

Its subcellular location is the cytoplasm. It carries out the reaction 3-phosphoshikimate + phosphoenolpyruvate = 5-O-(1-carboxyvinyl)-3-phosphoshikimate + phosphate. It participates in metabolic intermediate biosynthesis; chorismate biosynthesis; chorismate from D-erythrose 4-phosphate and phosphoenolpyruvate: step 6/7. Its function is as follows. Catalyzes the transfer of the enolpyruvyl moiety of phosphoenolpyruvate (PEP) to the 5-hydroxyl of shikimate-3-phosphate (S3P) to produce enolpyruvyl shikimate-3-phosphate and inorganic phosphate. This is 3-phosphoshikimate 1-carboxyvinyltransferase from Streptococcus pneumoniae serotype 2 (strain D39 / NCTC 7466).